The sequence spans 87 residues: Small ribosomal subunit protein uS17 (87 aa).

Belongs to the universal ribosomal protein uS17 family. In terms of assembly, part of the 30S ribosomal subunit.

Functionally, one of the primary rRNA binding proteins, it binds specifically to the 5'-end of 16S ribosomal RNA. In Neisseria gonorrhoeae (strain ATCC 700825 / FA 1090), this protein is Small ribosomal subunit protein uS17.